Consider the following 107-residue polypeptide: Small ribosomal subunit protein bS18 (107 aa).

Belongs to the bacterial ribosomal protein bS18 family. In terms of assembly, part of the 30S ribosomal subunit. Forms a tight heterodimer with protein bS6.

Its function is as follows. Binds as a heterodimer with protein bS6 to the central domain of the 16S rRNA, where it helps stabilize the platform of the 30S subunit. This chain is Small ribosomal subunit protein bS18, found in Mycoplasmopsis agalactiae (strain NCTC 10123 / CIP 59.7 / PG2) (Mycoplasma agalactiae).